Here is a 577-residue protein sequence, read N- to C-terminus: Protein O-linked-mannose beta-1,4-N-acetylglucosaminyltransferase 2 (577 aa).

The Cytoplasmic segment spans residues 1 to 4 (MNIA). Residues 5-25 (AVFNALLVSVLATVLWKYIKL) form a helical; Signal-anchor for type II membrane protein membrane-spanning segment. Topologically, residues 26-577 (REHAFMVEEE…PFADVLLCST (552 aa)) are lumenal. N-linked (GlcNAc...) asparagine glycans are attached at residues Asn98, Asn275, Asn335, and Asn540. Residues 481–577 (KVRDARCQAS…PFADVLLCST (97 aa)) enclose the Fibronectin type-III domain.

The protein belongs to the glycosyltransferase 61 family.

It localises to the endoplasmic reticulum membrane. The catalysed reaction is 3-O-(alpha-D-mannosyl)-L-threonyl-[protein] + UDP-N-acetyl-alpha-D-glucosamine = 3-O-(N-acetyl-beta-D-glucosaminyl-(1-&gt;4)-alpha-D-mannosyl)-L-threonyl-[protein] + UDP + H(+). The protein operates within protein modification; protein glycosylation. Its function is as follows. O-linked mannose beta-1,4-N-acetylglucosaminyltransferase that transfers UDP-N-acetyl-D-glucosamine to the 4-position of the mannose to generate N-acetyl-D-glucosamine-beta-1,4-O-D-mannosylprotein. Involved in the biosynthesis of the phosphorylated O-mannosyl trisaccharide (N-acetylgalactosamine-beta-3-N-acetylglucosamine-beta-4-(phosphate-6-)mannose), a carbohydrate structure present in alpha-dystroglycan (DAG1), which is required for binding laminin G-like domain-containing extracellular proteins with high affinity. This is Protein O-linked-mannose beta-1,4-N-acetylglucosaminyltransferase 2 (POMGNT2) from Gallus gallus (Chicken).